The chain runs to 422 residues: Synaptotagmin-1 (422 aa).

Over 1–57 the chain is Vesicular; sequence MVSESHHEALAAPPVTTVATVLPSNATEPASPGEGKEDAFSKLKEKFMNELHKIPLP. The N-linked (GlcNAc...) asparagine glycan is linked to Asn25. A helical transmembrane segment spans residues 58-80; it reads PWALIAIAIVAVLLVLTCCFCIC. S-palmitoyl cysteine attachment occurs at residues Cys75, Cys76, Cys78, Cys80, and Cys83. Residues 81-422 lie on the Cytoplasmic side of the membrane; that stretch reads KKCLFKKKNK…EVDAMLAVKK (342 aa). The disordered stretch occupies residues 113–142; sequence TMKDQALKDDDAETGLTDGEEKEEPKEEEK. Residues 122–134 show a composition bias toward acidic residues; sequence DDAETGLTDGEEK. Thr129 is modified (phosphothreonine). Residues 136-382 form a phospholipid binding region; sequence EPKEEEKLGK…AIGKVFVGYN (247 aa). The region spanning 142–261 is the C2 1 domain; that stretch reads KLGKLQYSLD…DFGHVTEEWR (120 aa). Residues Leu172, Asp173, and Asp179 each contribute to the Ca(2+) site. The residue at position 230 (Tyr230) is a Phosphotyrosine. Ca(2+) contacts are provided by Asp231, Phe232, Asp233, Ser236, Lys237, and Asp239. Phosphoserine is present on Ser265. The region spanning 273–406 is the C2 2 domain; it reads KLGDICFSLR…NPRRPIAQWH (134 aa). Asp304 and Asp310 together coordinate Ca(2+). Phosphoserine occurs at positions 343 and 345. Residues Asp364, Asp366, and Asp372 each coordinate Ca(2+).

This sequence belongs to the synaptotagmin family. Homotetramer. Heterodimer; heterodimerizes with SYT2 in presence of calcium. Interacts with SCAMP5. Interacts with STON2. Forms a complex with SV2B, syntaxin 1 and SNAP25. Interacts with SV2A, SV2B and SV2C. Interacts with RIMS1. Interacts with PRRT2. Interacts with DNAJC5 in a phosphorylation-dependent manner. Interacts (via N-terminus) with RAB3A. Interacts with SYT12. Interacts with calmodulin. Interacts with DNM1 (via C-terminal proline-rich domain (PRD)); this interaction facilitates vesicle fission during clathrin-mediated endocytosis (CME). Ca(2+) is required as a cofactor. Post-translationally, glycosylated. Expressed in melanocytes.

Its subcellular location is the cytoplasmic vesicle. It is found in the secretory vesicle membrane. It localises to the secretory vesicle. The protein localises to the synaptic vesicle membrane. The protein resides in the chromaffin granule membrane. Its subcellular location is the cytoplasm. Calcium sensor that participates in triggering neurotransmitter release at the synapse. May have a regulatory role in the membrane interactions during trafficking of synaptic vesicles at the active zone of the synapse. It binds acidic phospholipids with a specificity that requires the presence of both an acidic head group and a diacyl backbone. A Ca(2+)-dependent interaction between synaptotagmin and putative receptors for activated protein kinase C has also been reported. It can bind to at least three additional proteins in a Ca(2+)-independent manner; these are neurexins, syntaxin and AP2. Plays a role in dendrite formation by melanocytes. The chain is Synaptotagmin-1 from Homo sapiens (Human).